The primary structure comprises 708 residues: ARF GTPase-activating protein GIT2 (708 aa).

Residues 1 to 124 (MSKRLRSSDV…AFVHRLPCRE (124 aa)) form the Arf-GAP domain. Residues 11-34 (CADCNGPDPSWASVNRGTFICDEC) form a C4-type zinc finger. ANK repeat units lie at residues 132-161 (DLSK…QANF), 166-195 (KGST…DPGT), and 199-228 (SGKT…ELTD). The segment at 376 to 592 (STQHSTESQD…SPTLPSTEDV (217 aa)) is disordered. The segment covering 384-401 (QDNDQPDYDSVASDEDTD) has biased composition (acidic residues). 2 positions are modified to phosphoserine: Ser-393 and Ser-396. Thr-400 is subject to Phosphothreonine. Residues 407 to 438 (SKANRQKLQTLQSENSSLRRQATASACQVQTG) show a composition bias toward polar residues. The span at 504-518 (TSSSSLPSFPSTLSW) shows a compositional bias: low complexity. A phosphoserine mark is found at Ser-508, Ser-511, and Ser-519. The segment covering 519–532 (SRDESARRASRLEK) has biased composition (basic and acidic residues). Thr-536 bears the Phosphothreonine mark. Ser-563 carries the post-translational modification Phosphoserine.

May form heterooligomers with GIT1. Directly interacts with protein Piccolo/PCLO. Interacts with PPFIA1 and PPFIA2. Interacts with ARHGEF7. Identified in a complex with ARHGEF6 and BIN2. Interacts with PAK3. Interacts with PXN/paxillin. Interacts with TGFB1I1. Forms a complex with EFNB1 and GRB4/NCK2. In terms of processing, tyrosine phosphorylated when coexpressed in cells with PTK2/FAK1 and SRC. As to expression, expressed in the brain (at protein level).

GTPase-activating protein for ADP ribosylation factor family members, including ARF1. This chain is ARF GTPase-activating protein GIT2 (Git2), found in Mus musculus (Mouse).